Reading from the N-terminus, the 147-residue chain is Large ribosomal subunit protein uL13 (147 aa).

It belongs to the universal ribosomal protein uL13 family. As to quaternary structure, part of the 50S ribosomal subunit.

This protein is one of the early assembly proteins of the 50S ribosomal subunit, although it is not seen to bind rRNA by itself. It is important during the early stages of 50S assembly. This is Large ribosomal subunit protein uL13 from Pediococcus pentosaceus (strain ATCC 25745 / CCUG 21536 / LMG 10740 / 183-1w).